The primary structure comprises 382 residues: Succinyl-diaminopimelate desuccinylase (382 aa).

H70 provides a ligand contact to Zn(2+). The active site involves D72. D103 lines the Zn(2+) pocket. Residue E137 is the Proton acceptor of the active site. E138, E166, and H355 together coordinate Zn(2+).

This sequence belongs to the peptidase M20A family. DapE subfamily. In terms of assembly, homodimer. Zn(2+) is required as a cofactor. It depends on Co(2+) as a cofactor.

It catalyses the reaction N-succinyl-(2S,6S)-2,6-diaminopimelate + H2O = (2S,6S)-2,6-diaminopimelate + succinate. It functions in the pathway amino-acid biosynthesis; L-lysine biosynthesis via DAP pathway; LL-2,6-diaminopimelate from (S)-tetrahydrodipicolinate (succinylase route): step 3/3. Functionally, catalyzes the hydrolysis of N-succinyl-L,L-diaminopimelic acid (SDAP), forming succinate and LL-2,6-diaminopimelate (DAP), an intermediate involved in the bacterial biosynthesis of lysine and meso-diaminopimelic acid, an essential component of bacterial cell walls. The protein is Succinyl-diaminopimelate desuccinylase of Paracoccus denitrificans (strain Pd 1222).